A 540-amino-acid chain; its full sequence is Chaperonin GroEL (540 aa).

ATP is bound by residues 29 to 32 (TLGP), 86 to 90 (DGTTT), G413, 477 to 479 (DAL), and D493.

Belongs to the chaperonin (HSP60) family. In terms of assembly, forms a cylinder of 14 subunits composed of two heptameric rings stacked back-to-back. Interacts with the co-chaperonin GroES.

The protein localises to the cytoplasm. It catalyses the reaction ATP + H2O + a folded polypeptide = ADP + phosphate + an unfolded polypeptide.. Together with its co-chaperonin GroES, plays an essential role in assisting protein folding. The GroEL-GroES system forms a nano-cage that allows encapsulation of the non-native substrate proteins and provides a physical environment optimized to promote and accelerate protein folding. In Clostridium botulinum (strain Eklund 17B / Type B), this protein is Chaperonin GroEL.